Here is a 154-residue protein sequence, read N- to C-terminus: Endoribonuclease YbeY (154 aa).

Positions 115, 119, and 125 each coordinate Zn(2+).

This sequence belongs to the endoribonuclease YbeY family. Zn(2+) serves as cofactor.

The protein localises to the cytoplasm. Its function is as follows. Single strand-specific metallo-endoribonuclease involved in late-stage 70S ribosome quality control and in maturation of the 3' terminus of the 16S rRNA. This chain is Endoribonuclease YbeY, found in Halorhodospira halophila (strain DSM 244 / SL1) (Ectothiorhodospira halophila (strain DSM 244 / SL1)).